Consider the following 1023-residue polypeptide: Cell division cycle-associated protein 2 (1023 aa).

A compositionally biased stretch (basic and acidic residues) spans 1–14 (MDANSKDKPPETKE). Residues 1 to 21 (MDANSKDKPPETKESAMNNAG) form a disordered region. 7 positions are modified to phosphoserine: S98, S120, S126, S131, S210, S291, and S309. T312 carries the phosphothreonine modification. The region spanning 389–449 (KRKRVTFGED…PEPLPQPDFD (61 aa)) is the PP1-binding domain. Phosphoserine occurs at positions 400 and 407. Residue T412 is modified to Phosphothreonine. A Phosphoserine modification is found at S437. Positions 542 to 580 (SQETKCTKRALPKKSQVLKSCRKKKGKGKKSVQKSLYGE) are disordered. The segment covering 561–573 (SCRKKKGKGKKSV) has biased composition (basic residues). Residues S591 and S614 each carry the phosphoserine modification. A disordered region spans residues 667-729 (SSLGNATSDE…ERVASDSPKP (63 aa)). Low complexity predominate over residues 679 to 691 (NTNIMNINENKNI). Residues 696–706 (NKSESENEPKA) are compositionally biased toward basic and acidic residues. S710 and S756 each carry phosphoserine. K762 participates in a covalent cross-link: Glycyl lysine isopeptide (Lys-Gly) (interchain with G-Cter in SUMO2). Residues 803 to 816 (ESKSQSEDLGRKPM) show a composition bias toward basic and acidic residues. 2 disordered regions span residues 803–860 (ESKS…GSSV) and 936–1023 (SPIK…ERKQ). Phosphoserine is present on residues S936 and S977. Composition is skewed to polar residues over residues 979 to 992 (CIST…TSQF) and 1000 to 1010 (SLNGKGESSLT). S1000 carries the post-translational modification Phosphoserine. Residues 1013-1023 (ERIEHNGERKQ) show a composition bias toward basic and acidic residues.

As to quaternary structure, interacts with PPP1CC. In terms of processing, phosphorylated by CDK1. May regulate its subcellular location. In terms of tissue distribution, ubiquitously expressed.

The protein localises to the nucleus. In terms of biological role, regulator of chromosome structure during mitosis required for condensin-depleted chromosomes to retain their compact architecture through anaphase. Acts by mediating the recruitment of phopsphatase PP1-gamma subunit (PPP1CC) to chromatin at anaphase and into the following interphase. At anaphase onset, its association with chromatin targets a pool of PPP1CC to dephosphorylate substrates. In Homo sapiens (Human), this protein is Cell division cycle-associated protein 2 (CDCA2).